Consider the following 224-residue polypeptide: Peroxiredoxin-6 (224 aa).

The region spanning 5–169 (LLLGDVAPNF…ILRVVISLQL (165 aa)) is the Thioredoxin domain. The segment at 31–40 (DSWGILFSHP) is required and sufficient for targeting to lysosomes and lamellar bodies. T44 is modified (phosphothreonine). C47 functions as the Cysteine sulfenic acid (-SOH) intermediate; for peroxidase activity in the catalytic mechanism. Residue K63 is modified to N6-acetyllysine. Y89 is subject to Phosphotyrosine. Residue D140 is the For phospholipase activity of the active site. A Phosphothreonine; by MAPK modification is found at T177. K209 bears the N6-acetyllysine; alternate mark. Residue K209 is modified to N6-succinyllysine; alternate.

It belongs to the peroxiredoxin family. Prx6 subfamily. In terms of assembly, homodimer. Interacts with GSTP1; mediates PRDX6 glutathionylation and regeneration. Interacts with APEX1. Interacts with STH. May interact with FAM168B. May interact with HTR2A. Irreversibly inactivated by overoxidation of Cys-47 to sulfinic acid (Cys-SO(2)H) and sulfonic acid (Cys-SO(3)H) forms upon oxidative stress. In terms of processing, phosphorylation at Thr-177 by MAP kinases increases the phospholipase activity of the enzyme. The phosphorylated form exhibits a greater lysophosphatidylcholine acyltransferase activity compared to the non-phosphorylated form.

It localises to the cytoplasm. It is found in the lysosome. It carries out the reaction a hydroperoxide + 2 glutathione = an alcohol + glutathione disulfide + H2O. The catalysed reaction is a 1,2-diacyl-sn-glycero-3-phosphocholine + H2O = a 1-acyl-sn-glycero-3-phosphocholine + a fatty acid + H(+). The enzyme catalyses a 1-acyl-sn-glycero-3-phosphocholine + an acyl-CoA = a 1,2-diacyl-sn-glycero-3-phosphocholine + CoA. It catalyses the reaction 1-hexadecanoyl-sn-glycero-3-phosphocholine + hexadecanoyl-CoA = 1,2-dihexadecanoyl-sn-glycero-3-phosphocholine + CoA. It carries out the reaction 1,2-dihexadecanoyl-sn-glycero-3-phosphocholine + H2O = 1-hexadecanoyl-sn-glycero-3-phosphocholine + hexadecanoate + H(+). Functionally, thiol-specific peroxidase that catalyzes the reduction of hydrogen peroxide and organic hydroperoxides to water and alcohols, respectively. Can reduce H(2)O(2) and short chain organic, fatty acid, and phospholipid hydroperoxides. Also has phospholipase activity, and can therefore either reduce the oxidized sn-2 fatty acyl group of phospholipids (peroxidase activity) or hydrolyze the sn-2 ester bond of phospholipids (phospholipase activity). These activities are dependent on binding to phospholipids at acidic pH and to oxidized phospholipds at cytosolic pH. Plays a role in cell protection against oxidative stress by detoxifying peroxides and in phospholipid homeostasis. Exhibits acyl-CoA-dependent lysophospholipid acyltransferase which mediates the conversion of lysophosphatidylcholine (1-acyl-sn-glycero-3-phosphocholine or LPC) into phosphatidylcholine (1,2-diacyl-sn-glycero-3-phosphocholine or PC). Shows a clear preference for LPC as the lysophospholipid and for palmitoyl CoA as the fatty acyl substrate. This is Peroxiredoxin-6 (PRDX6) from Pongo abelii (Sumatran orangutan).